The following is a 369-amino-acid chain: Nuclear pore complex-interacting protein family member A6 (369 aa).

The disordered stretch occupies residues 151–170; that stretch reads SMKEREHGEKERQVSEAEEN.

This sequence belongs to the NPIP family.

The polypeptide is Nuclear pore complex-interacting protein family member A6 (Homo sapiens (Human)).